A 96-amino-acid polypeptide reads, in one-letter code: uncharacterized protein (96 aa).

Positions methionine 1–glycine 30 are cleaved as a signal peptide. The Extracellular portion of the chain corresponds to alanine 31–aspartate 54. The helical transmembrane segment at phenylalanine 55–leucine 75 threads the bilayer. The Cytoplasmic portion of the chain corresponds to lysine 76–lysine 96.

It localises to the membrane. This is an uncharacterized protein from Dictyostelium discoideum (Social amoeba).